Here is a 636-residue protein sequence, read N- to C-terminus: Threonine--tRNA ligase (636 aa).

The region spanning 1-63 (MINITTSFPN…SKDGSVDPVT (63 aa)) is the TGS domain. Residues 244 to 535 (DHRKIAKDLG…LIEHYAGNIP (292 aa)) form a catalytic region. Zn(2+) is bound by residues Cys-335, His-386, and His-512.

This sequence belongs to the class-II aminoacyl-tRNA synthetase family. As to quaternary structure, homodimer. It depends on Zn(2+) as a cofactor.

It localises to the cytoplasm. The catalysed reaction is tRNA(Thr) + L-threonine + ATP = L-threonyl-tRNA(Thr) + AMP + diphosphate + H(+). Catalyzes the attachment of threonine to tRNA(Thr) in a two-step reaction: L-threonine is first activated by ATP to form Thr-AMP and then transferred to the acceptor end of tRNA(Thr). Also edits incorrectly charged L-seryl-tRNA(Thr). The chain is Threonine--tRNA ligase from Anaplasma marginale (strain Florida).